We begin with the raw amino-acid sequence, 485 residues long: AP2-like ethylene-responsive transcription factor TOE2 (485 aa).

Over residues 124-135 the composition is skewed to gly residues; it reads GDFIGSGSGGGD. The disordered stretch occupies residues 124–161; that stretch reads GDFIGSGSGGGDASRVMQPPSQPVKKSRRGPRSKSSQY. Positions 160-216 form a DNA-binding region, AP2/ERF; the sequence is QYRGVTFYRRTGRWESHIWDCGKQVYLGGFDTAHAAARAYDRAAVKFRGLEADINFV.

This sequence belongs to the AP2/ERF transcription factor family. AP2 subfamily.

It is found in the nucleus. Its function is as follows. Probably acts as a transcriptional activator. Binds to the GCC-box pathogenesis-related promoter element. May be involved in the regulation of gene expression by stress factors and by components of stress signal transduction pathways. Regulates negatively the transition to flowering time and confers flowering time delay. This Arabidopsis thaliana (Mouse-ear cress) protein is AP2-like ethylene-responsive transcription factor TOE2 (TOE2).